Here is a 602-residue protein sequence, read N- to C-terminus: Aspartate--tRNA(Asp/Asn) ligase (602 aa).

An L-aspartate-binding site is contributed by E170. The segment at 194-197 (QLFK) is aspartate. R216 provides a ligand contact to L-aspartate. Residues 216 to 218 (RDE) and Q225 contribute to the ATP site. An L-aspartate-binding site is contributed by H448. E482 contributes to the ATP binding site. R489 serves as a coordination point for L-aspartate. ATP is bound at residue 534–537 (GWDR). Residues 559–602 (GGVDPLTDAPAPISAQQRKESGIDAKPEKKSEDKKSEGDTAEAK) form a disordered region. Positions 575–602 (QRKESGIDAKPEKKSEDKKSEGDTAEAK) are enriched in basic and acidic residues.

The protein belongs to the class-II aminoacyl-tRNA synthetase family. Type 1 subfamily. In terms of assembly, homodimer.

It is found in the cytoplasm. It catalyses the reaction tRNA(Asx) + L-aspartate + ATP = L-aspartyl-tRNA(Asx) + AMP + diphosphate. Its function is as follows. Aspartyl-tRNA synthetase with relaxed tRNA specificity since it is able to aspartylate not only its cognate tRNA(Asp) but also tRNA(Asn). Reaction proceeds in two steps: L-aspartate is first activated by ATP to form Asp-AMP and then transferred to the acceptor end of tRNA(Asp/Asn). This chain is Aspartate--tRNA(Asp/Asn) ligase, found in Rhodococcus erythropolis (strain PR4 / NBRC 100887).